The following is a 767-amino-acid chain: Slo-interacting protein 1 (767 aa).

Residues 202–280 enclose the PDZ domain; it reads QQSSTDTNKG…SVTLLVSRIL (79 aa). Disordered regions lie at residues 521-557 and 744-767; these read GNAA…NPDE and KEER…QQQQ. Polar residues predominate over residues 532–555; the sequence is NSSSAYNTGDSNNSASPHQNTTNP. Residues 744–755 are compositionally biased toward basic and acidic residues; that stretch reads KEERKRHIERAR.

Interacts with Slo. In terms of tissue distribution, in embryos, it is expressed throughout the CNS and in several peripheral locations. Colocalizes with Slo.

May selectively reduce calcium-activated potassium channel (Slo) currents by reducing the number of Slo channels in the plasma membrane. The chain is Slo-interacting protein 1 (Slip1) from Drosophila melanogaster (Fruit fly).